A 242-amino-acid chain; its full sequence is MDHKSPLVSWNLFGFDIVFNLSSILMILVTAFLVFLLAIICTRNLKKRPTGKQNFVEWIFDFVRGIIEGNMAWKKGGQFHFLAVTLILYIFIANMLGLPFSIVTKDHTLWWKSPTADATVTLTLSTTIILLTHFYGIKMRGTKQYLKGYVQPFWPLAIINVFEEFTSTLTLGLRLYGNIFAGEILLTLLAGLFFNEPAWGWIISIPGLIVWQAFSIFVGTIQAYIFIMLSMVYMSHKVADEH.

5 helical membrane passes run 21 to 41 (LSSI…AIIC), 83 to 103 (AVTL…FSIV), 117 to 137 (DATV…FYGI), 175 to 195 (LYGN…LFFN), and 198 to 218 (AWGW…SIFV).

It belongs to the ATPase A chain family. F-type ATPases have 2 components, CF(1) - the catalytic core - and CF(0) - the membrane proton channel. CF(1) has five subunits: alpha(3), beta(3), gamma(1), delta(1), epsilon(1). CF(0) has three main subunits: a(1), b(2) and c(9-12). The alpha and beta chains form an alternating ring which encloses part of the gamma chain. CF(1) is attached to CF(0) by a central stalk formed by the gamma and epsilon chains, while a peripheral stalk is formed by the delta and b chains.

The protein localises to the cell membrane. Its function is as follows. Key component of the proton channel; it plays a direct role in the translocation of protons across the membrane. In Staphylococcus aureus (strain Newman), this protein is ATP synthase subunit a.